The following is a 369-amino-acid chain: Pyrimidine monooxygenase RutA (369 aa).

FMN-binding positions include 49-50 (IK), Asn-115, Glu-124, 140-141 (RY), and Ser-190.

The protein belongs to the NtaA/SnaA/DszA monooxygenase family. RutA subfamily.

It carries out the reaction uracil + FMNH2 + NADH + O2 = (Z)-3-ureidoacrylate + FMN + NAD(+) + H2O + H(+). It catalyses the reaction thymine + FMNH2 + NADH + O2 = (Z)-2-methylureidoacrylate + FMN + NAD(+) + H2O + H(+). Functionally, catalyzes the pyrimidine ring opening between N-3 and C-4 by an unusual flavin hydroperoxide-catalyzed mechanism, adding oxygen atoms in the process to yield ureidoacrylate peracid, that immediately reacts with FMN forming ureidoacrylate and FMN-N(5)-oxide. The FMN-N(5)-oxide reacts spontaneously with NADH to produce FMN. Requires the flavin reductase RutF to regenerate FMN in vivo. In Acinetobacter baylyi (strain ATCC 33305 / BD413 / ADP1), this protein is Pyrimidine monooxygenase RutA.